Consider the following 543-residue polypeptide: MTNYIFVTGGVVSSLGKGIAAASLAAILEARGLTVTMLKLDPYINVDPGTMSPIQHGEVFVTDDGAETDLDLGHYERFIRTRMTKRNNFTTGRVYEEVLKRERRGDYLGATIQVIPHITNEIKRRVIEGAEGHDVAIVEVGGTVGDIESQPFLEAIRQLGTEVGRERAMFMHLTLVPYMPASGEVKTKPTQHSVKELRSIGIQPDILVCRSVGALPASERSKIALFTNVADKAVISLKDVDSIYRIPAALKAQGMDQLVVDRFGLECNEADLSEWEQVLYAESNPTAEVNIGMIGKYVELPDAYKSVNEALKHAGLKNRLTVNIHHIDSQDVESKGTQILEQLDAILVPGGFGERGIEGKIAAARYARENKVPYLGICLGMQVALIEYARNVAGMEKANSTEFDPETPYPVVGLITEWLDAAGTTEVRTETSDLGGTMRLGSQLCHLIEGTKVHEMYGNAEIYERHRHRYEVNNNLRDQIEAAGLKVSGLSTDKRLVEVVEIPDHPWFIAGQFHPEFTSTPRDGHPLFTGFVAAAGKYQKENH.

Positions 1-265 (MTNYIFVTGG…DQLVVDRFGL (265 aa)) are amidoligase domain. Serine 13 contacts CTP. UTP is bound at residue serine 13. Residues 14–19 (SLGKGI) and aspartate 71 contribute to the ATP site. The Mg(2+) site is built by aspartate 71 and glutamate 139. Residues 146–148 (DIE), 186–191 (KTKPTQ), and lysine 222 contribute to the CTP site. Residues 186–191 (KTKPTQ) and lysine 222 contribute to the UTP site. 238–240 (KDV) lines the ATP pocket. The 252-residue stretch at 290–541 (NIGMIGKYVE…VAAAGKYQKE (252 aa)) folds into the Glutamine amidotransferase type-1 domain. An L-glutamine-binding site is contributed by glycine 351. The active-site Nucleophile; for glutamine hydrolysis is the cysteine 378. L-glutamine contacts are provided by residues 379–382 (LGMQ), glutamate 402, and arginine 469. Active-site residues include histidine 514 and glutamate 516.

It belongs to the CTP synthase family. Homotetramer.

The enzyme catalyses UTP + L-glutamine + ATP + H2O = CTP + L-glutamate + ADP + phosphate + 2 H(+). It catalyses the reaction L-glutamine + H2O = L-glutamate + NH4(+). It carries out the reaction UTP + NH4(+) + ATP = CTP + ADP + phosphate + 2 H(+). The protein operates within pyrimidine metabolism; CTP biosynthesis via de novo pathway; CTP from UDP: step 2/2. With respect to regulation, allosterically activated by GTP, when glutamine is the substrate; GTP has no effect on the reaction when ammonia is the substrate. The allosteric effector GTP functions by stabilizing the protein conformation that binds the tetrahedral intermediate(s) formed during glutamine hydrolysis. Inhibited by the product CTP, via allosteric rather than competitive inhibition. In terms of biological role, catalyzes the ATP-dependent amination of UTP to CTP with either L-glutamine or ammonia as the source of nitrogen. Regulates intracellular CTP levels through interactions with the four ribonucleotide triphosphates. This is CTP synthase from Alteromonas mediterranea (strain DSM 17117 / CIP 110805 / LMG 28347 / Deep ecotype).